The sequence spans 489 residues: NF-kappa-B inhibitor cactus (489 aa).

Positions 1–26 are enriched in low complexity; sequence MPSPTKAAEAATKATATSDCSCSAAS. Disordered stretches follow at residues 1 to 138 and 163 to 203; these read MPSP…SMRL and NNLG…APPS. Position 45 is a phosphoserine; by PKC (S45). The segment covering 69–86 has biased composition (polar residues); that stretch reads NETSDSGFISGPQSSQIC. A Phosphoserine; by PKC modification is found at S135. A compositionally biased stretch (polar residues) spans 163–180; sequence NNLGQSSSTQITGRSKFQ. T174 is subject to Phosphothreonine; by PKC. Over residues 181–203 the composition is skewed to low complexity; that stretch reads SSTASTANANPSGXGATSSAPPS. ANK repeat units lie at residues 220–252, 256–285, 287–316, 350–379, and 384–413; these read DGDTPXHLACISGSVEVVAALIRMAPHPCLLNI, VAQTPLHLAALTAQPNIMRILLLAGAEVRD, HGNTALHLSCIAGEKQCVRALTEEFGATEI, DGERCVHLAAEAGHIDILRILVSHGADINA, and SGRTPLHIAIEGCNEDLANFLLDECEKLNL. T308 is subject to Phosphothreonine; by PKC. At S384 the chain carries Phosphoserine; by PKC.

The protein localises to the cytoplasm. Its function is as follows. Involved in the formation of the dorsoventral pattern. It inhibits nuclear translocation of the dorsal morphogen in the dorsal region of the embryo. The chain is NF-kappa-B inhibitor cactus (cact) from Drosophila yakuba (Fruit fly).